Reading from the N-terminus, the 251-residue chain is Demethylmenaquinone methyltransferase (251 aa).

Residues Thr66, Asp87, and 115-116 each bind S-adenosyl-L-methionine; that span reads NA.

It belongs to the class I-like SAM-binding methyltransferase superfamily. MenG/UbiE family.

The catalysed reaction is a 2-demethylmenaquinol + S-adenosyl-L-methionine = a menaquinol + S-adenosyl-L-homocysteine + H(+). It functions in the pathway quinol/quinone metabolism; menaquinone biosynthesis; menaquinol from 1,4-dihydroxy-2-naphthoate: step 2/2. Its function is as follows. Methyltransferase required for the conversion of demethylmenaquinol (DMKH2) to menaquinol (MKH2). The protein is Demethylmenaquinone methyltransferase of Symbiobacterium thermophilum (strain DSM 24528 / JCM 14929 / IAM 14863 / T).